A 499-amino-acid polypeptide reads, in one-letter code: Putative protein phosphatase 2C 76 (499 aa).

The first 34 residues, 1–34, serve as a signal peptide directing secretion; the sequence is MRLGCSGRRRRLLRAALLRLVVLVLVAPPRRCAG. Positions 67–101 are disordered; the sequence is AGSGGEGDGDRRSSSSSPPPPPHPRGCHVAVDRGR. In terms of domain architecture, PPM-type phosphatase spans 92–457; the sequence is GCHVAVDRGR…DNVAAVIVPL (366 aa). Aspartate 138 and glycine 139 together coordinate Mn(2+). Residues 286-306 are disordered; sequence KKTSVVSGKRRRKRNSNNRDD. The Mn(2+) site is built by aspartate 397 and aspartate 448.

This sequence belongs to the PP2C family. Mg(2+) is required as a cofactor. Mn(2+) serves as cofactor.

The catalysed reaction is O-phospho-L-seryl-[protein] + H2O = L-seryl-[protein] + phosphate. The enzyme catalyses O-phospho-L-threonyl-[protein] + H2O = L-threonyl-[protein] + phosphate. The chain is Putative protein phosphatase 2C 76 from Oryza sativa subsp. japonica (Rice).